The sequence spans 274 residues: NAD kinase (274 aa).

The active-site Proton acceptor is Asp50. Residues 50–51, 126–127, Arg152, Asp154, 165–170, and Ala189 contribute to the NAD(+) site; these read DG, NE, and TAYNKS.

The protein belongs to the NAD kinase family. The cofactor is a divalent metal cation.

Its subcellular location is the cytoplasm. It catalyses the reaction NAD(+) + ATP = ADP + NADP(+) + H(+). Involved in the regulation of the intracellular balance of NAD and NADP, and is a key enzyme in the biosynthesis of NADP. Catalyzes specifically the phosphorylation on 2'-hydroxyl of the adenosine moiety of NAD to yield NADP. This is NAD kinase from Streptococcus gordonii (strain Challis / ATCC 35105 / BCRC 15272 / CH1 / DL1 / V288).